A 235-amino-acid chain; its full sequence is Proteasome subunit alpha type-2-A (235 aa).

K64 participates in a covalent cross-link: Glycyl lysine isopeptide (Lys-Gly) (interchain with G-Cter in ubiquitin).

The protein belongs to the peptidase T1A family. As to quaternary structure, component of the 20S core complex of the 26S proteasome. The 26S proteasome is composed of a core protease (CP), known as the 20S proteasome, capped at one or both ends by the 19S regulatory particle (RP/PA700). The 20S proteasome core is composed of 28 subunits that are arranged in four stacked rings, resulting in a barrel-shaped structure. The two end rings are each formed by seven alpha subunits, and the two central rings are each formed by seven beta subunits. The catalytic chamber with the active sites is on the inside of the barrel.

The protein localises to the cytoplasm. It is found in the nucleus. The proteasome is a multicatalytic proteinase complex which is characterized by its ability to cleave peptides with Arg, Phe, Tyr, Leu, and Glu adjacent to the leaving group at neutral or slightly basic pH. The proteasome has an ATP-dependent proteolytic activity. The sequence is that of Proteasome subunit alpha type-2-A (PAB1) from Arabidopsis thaliana (Mouse-ear cress).